We begin with the raw amino-acid sequence, 243 residues long: NAD(P)H-quinone oxidoreductase subunit K (243 aa).

The [4Fe-4S] cluster site is built by C59, C60, C124, and C155.

The protein belongs to the complex I 20 kDa subunit family. NDH-1 can be composed of about 15 different subunits; different subcomplexes with different compositions have been identified which probably have different functions. It depends on [4Fe-4S] cluster as a cofactor.

Its subcellular location is the cellular thylakoid membrane. The catalysed reaction is a plastoquinone + NADH + (n+1) H(+)(in) = a plastoquinol + NAD(+) + n H(+)(out). The enzyme catalyses a plastoquinone + NADPH + (n+1) H(+)(in) = a plastoquinol + NADP(+) + n H(+)(out). In terms of biological role, NDH-1 shuttles electrons from an unknown electron donor, via FMN and iron-sulfur (Fe-S) centers, to quinones in the respiratory and/or the photosynthetic chain. The immediate electron acceptor for the enzyme in this species is believed to be plastoquinone. Couples the redox reaction to proton translocation, and thus conserves the redox energy in a proton gradient. Cyanobacterial NDH-1 also plays a role in inorganic carbon-concentration. The sequence is that of NAD(P)H-quinone oxidoreductase subunit K from Picosynechococcus sp. (strain ATCC 27264 / PCC 7002 / PR-6) (Agmenellum quadruplicatum).